The following is a 330-amino-acid chain: Beta-ketoacyl-[acyl-carrier-protein] synthase III (330 aa).

Active-site residues include Cys114 and His254. The segment at 255–259 (QANLR) is ACP-binding. Asn284 is an active-site residue.

The protein belongs to the thiolase-like superfamily. FabH family. As to quaternary structure, homodimer.

Its subcellular location is the cytoplasm. The enzyme catalyses malonyl-[ACP] + acetyl-CoA + H(+) = 3-oxobutanoyl-[ACP] + CO2 + CoA. It participates in lipid metabolism; fatty acid biosynthesis. Catalyzes the condensation reaction of fatty acid synthesis by the addition to an acyl acceptor of two carbons from malonyl-ACP. Catalyzes the first condensation reaction which initiates fatty acid synthesis and may therefore play a role in governing the total rate of fatty acid production. Possesses both acetoacetyl-ACP synthase and acetyl transacylase activities. Its substrate specificity determines the biosynthesis of branched-chain and/or straight-chain of fatty acids. This Roseiflexus castenholzii (strain DSM 13941 / HLO8) protein is Beta-ketoacyl-[acyl-carrier-protein] synthase III.